A 286-amino-acid polypeptide reads, in one-letter code: Ribosome-inactivating protein beta-momorcharin (286 aa).

Residues 1-23 (MVKCLLLSFLIIAIFIGVPTAKG) form the signal peptide. Asn74 carries N-linked (GlcNAc...) asparagine glycosylation. Catalysis depends on residues Tyr93, Tyr132, Glu181, and Arg184.

The protein belongs to the ribosome-inactivating protein family. Type 1 RIP subfamily. Bound to a branched hexasaccharide.

It carries out the reaction Endohydrolysis of the N-glycosidic bond at one specific adenosine on the 28S rRNA.. Irreversibly relaxes supercoiled DNA and catalyzes double-stranded breakage. Also acts as a ribosome inactivating protein. This is Ribosome-inactivating protein beta-momorcharin (MAP30) from Momordica charantia (Bitter gourd).